The following is a 370-amino-acid chain: MKYQLLKNCAGARRGRIQFDRGVVETPAFMPVGTYGTVKSLTTEEVKDTGTQMILCNAFHLWLRSEQEIIKLHGDLHHFMHWYGPIITDSGGFQIFSISNLNKITEAGVYFRHPINGSAIFLSPEKSMEIQYDLGSDIVMVLDECTPYPVQWDEAKKSMVMSLRWSERSHKRFHELKNNNALFGIIQGGMYKDLRDLSVKKLIEIGFDGYAIGGLSVGEPKENMHHILAHICPQLPEDKPRYLMGVGKPEDLIEGWRRGIDMFDCVIPTRNARNGHLFVTNGVVKIRNAKYKYDITSLDIYCDCYTCCNYSRAYLHHLSRCNEILGARLNTIHNLRYYQRLMADLRDAIDTGTSQYFIEEFYNKTRNSYY.

The active-site Proton acceptor is the Asp-89. Residues 89–93 (DSGGF), Asp-143, Gln-187, and Gly-214 contribute to the substrate site. Residues 245 to 251 (GVGKPED) are RNA binding. Asp-264 functions as the Nucleophile in the catalytic mechanism. The RNA binding; important for wobble base 34 recognition stretch occupies residues 269-273 (TRNAR). Positions 302, 304, 307, and 333 each coordinate Zn(2+).

It belongs to the queuine tRNA-ribosyltransferase family. Homodimer. Within each dimer, one monomer is responsible for RNA recognition and catalysis, while the other monomer binds to the replacement base PreQ1. Zn(2+) is required as a cofactor.

It catalyses the reaction 7-aminomethyl-7-carbaguanine + guanosine(34) in tRNA = 7-aminomethyl-7-carbaguanosine(34) in tRNA + guanine. Its pathway is tRNA modification; tRNA-queuosine biosynthesis. Its function is as follows. Catalyzes the base-exchange of a guanine (G) residue with the queuine precursor 7-aminomethyl-7-deazaguanine (PreQ1) at position 34 (anticodon wobble position) in tRNAs with GU(N) anticodons (tRNA-Asp, -Asn, -His and -Tyr). Catalysis occurs through a double-displacement mechanism. The nucleophile active site attacks the C1' of nucleotide 34 to detach the guanine base from the RNA, forming a covalent enzyme-RNA intermediate. The proton acceptor active site deprotonates the incoming PreQ1, allowing a nucleophilic attack on the C1' of the ribose to form the product. After dissociation, two additional enzymatic reactions on the tRNA convert PreQ1 to queuine (Q), resulting in the hypermodified nucleoside queuosine (7-(((4,5-cis-dihydroxy-2-cyclopenten-1-yl)amino)methyl)-7-deazaguanosine). This chain is Queuine tRNA-ribosyltransferase, found in Baumannia cicadellinicola subsp. Homalodisca coagulata.